Consider the following 398-residue polypeptide: Phosphomevalonate dehydratase large subunit (398 aa).

(R)-5-phosphomevalonate is bound by residues glycine 48, valine 49, serine 50, asparagine 76, and proline 77. Cysteine 116 lines the [4Fe-4S] cluster pocket. Residues glutamate 136 and serine 137 each coordinate (R)-5-phosphomevalonate. Residues cysteine 287 and cysteine 342 each coordinate [4Fe-4S] cluster. Lysine 361 provides a ligand contact to (R)-5-phosphomevalonate.

It belongs to the AcnX type II large subunit family. Heterodimer composed of a large subunit (PMDh-L) and a small subunit (PMDh-S). [4Fe-4S] cluster is required as a cofactor.

The catalysed reaction is (R)-5-phosphomevalonate = (2E)-3-methyl-5-phosphooxypent-2-enoate + H2O. The protein operates within isoprenoid biosynthesis; isopentenyl diphosphate biosynthesis via mevalonate pathway. Its function is as follows. Component of a hydro-lyase that catalyzes the dehydration of mevalonate 5-phosphate (MVA5P) to form trans-anhydromevalonate 5-phosphate (tAHMP). Involved in the archaeal mevalonate (MVA) pathway, which provides fundamental precursors for isoprenoid biosynthesis, such as isopentenyl diphosphate (IPP) and dimethylallyl diphosphate (DMAPP). This Methanosarcina mazei (strain ATCC BAA-159 / DSM 3647 / Goe1 / Go1 / JCM 11833 / OCM 88) (Methanosarcina frisia) protein is Phosphomevalonate dehydratase large subunit.